The chain runs to 119 residues: Beta-2-microglobulin (119 aa).

Positions 1–20 (MSRSVALAVLALLSLSGLEA) are cleaved as a signal peptide. The 90-residue stretch at 25–114 (PKIQVYSRHP…VTLSGPRTVK (90 aa)) folds into the Ig-like C1-type domain. An intrachain disulfide couples cysteine 45 to cysteine 100.

This sequence belongs to the beta-2-microglobulin family. In terms of assembly, heterodimer of an alpha chain and a beta chain. Beta-2-microglobulin is the beta-chain of major histocompatibility complex class I molecules.

Its subcellular location is the secreted. Functionally, component of the class I major histocompatibility complex (MHC). Involved in the presentation of peptide antigens to the immune system. The chain is Beta-2-microglobulin (B2M) from Papio anubis (Olive baboon).